Consider the following 855-residue polypeptide: Potassium transporter 13 (855 aa).

Positions 1 to 67 (MFHVEEESSG…EMDSDEEDDN (67 aa)) are disordered. Over 1 to 105 (MFHVEEESSG…EIEDTGIGKK (105 aa)) the chain is Cytoplasmic. Positions 36–51 (EKDDYEVNEDYDDDGY) are enriched in acidic residues. A helical membrane pass occupies residues 106–126 (LILALQTLGVVFGDIGTSPLY). Residues 127-142 (TFTVMFRRSPINDKED) are Extracellular-facing. The chain crosses the membrane as a helical span at residues 143–163 (IIGALSLVIYTLILIPLVKYV). Topologically, residues 164-233 (HFVLWANDDG…RLEASMALKK (70 aa)) are cytoplasmic. The helical transmembrane segment at 234–254 (LLLILVLAGTAMVIADAVVTP) threads the bilayer. Topologically, residues 255–268 (AMSVMSAIGGLKVG) are extracellular. The helical transmembrane segment at 269–289 (VGVIEQDQVVVISVSFLVILF) threads the bilayer. Residues 290–298 (SVQKYGTSK) lie on the Cytoplasmic side of the membrane. The chain crosses the membrane as a helical span at residues 299 to 319 (LGLVLGPALLLWFFCLAGIGI). The Extracellular portion of the chain corresponds to 320 to 346 (YNLVKYDSSVFKAFNPAYIYFFFKRNS). Residues 347–367 (VNAWYALGGCVLCATGSEAMF) form a helical membrane-spanning segment. The Cytoplasmic portion of the chain corresponds to 368-379 (ADLSYFSVHSIQ). Residues 380–400 (LTFILLVLPCLLLGYLGQAAY) form a helical membrane-spanning segment. The Extracellular portion of the chain corresponds to 401–415 (LSENFSAAGDAFFSS). Asparagine 404 is a glycosylation site (N-linked (GlcNAc...) asparagine). A helical transmembrane segment spans residues 416–436 (VPSSLFWPVFLISNVAALIAS). The Cytoplasmic segment spans residues 437–467 (RAMTTATFTCIKQSIALGCFPRLKIIHTSKK). A helical membrane pass occupies residues 468–488 (FIGQIYIPVLNWSLLVVCLIV). The Extracellular portion of the chain corresponds to 489–503 (VCSTSNIFAIGNAYG). The chain crosses the membrane as a helical span at residues 504–524 (IAELGIMMTTTILVTLIMLLI). Residues 525-528 (WQTN) are Cytoplasmic-facing. A helical membrane pass occupies residues 529 to 549 (IIVVSMFAIVSLIVELVFFSS). The Extracellular portion of the chain corresponds to 550 to 553 (VCSS). Residues 554–574 (VADGSWIILVFATIMFLIMFV) form a helical membrane-spanning segment. Residues 575–855 (WNYGSKLKYE…LMQVGMTYMV (281 aa)) are Cytoplasmic-facing. Serine 766 is modified (phosphoserine).

The protein belongs to the HAK/KUP transporter (TC 2.A.72.3) family.

The protein localises to the cell membrane. Probable potassium transporter. The sequence is that of Potassium transporter 13 (POT13) from Arabidopsis thaliana (Mouse-ear cress).